A 447-amino-acid chain; its full sequence is Dual specificity protein phosphatase CDC14C (447 aa).

The interval 14–168 is a; that stretch reads PQDDVYVDIT…AMQYGFLNFN (155 aa). Positions 169-182 are linker; sequence SFNLDEYEHYEKAE. The tract at residues 183–349 is b; sequence NGDLNWIIPD…EGDYFRQRLK (167 aa). Positions 184 to 344 constitute a Tyrosine-protein phosphatase domain; that stretch reads GDLNWIIPDR…TSLWLEGDYF (161 aa). Cysteine 284 functions as the Phosphocysteine intermediate in the catalytic mechanism. The helical transmembrane segment at 426–446 threads the bilayer; it reads FTLCSVVIWWIVCDYILPILL.

The protein belongs to the protein-tyrosine phosphatase family. Non-receptor class CDC14 subfamily.

The protein resides in the endoplasmic reticulum membrane. The enzyme catalyses O-phospho-L-tyrosyl-[protein] + H2O = L-tyrosyl-[protein] + phosphate. It catalyses the reaction O-phospho-L-seryl-[protein] + H2O = L-seryl-[protein] + phosphate. It carries out the reaction O-phospho-L-threonyl-[protein] + H2O = L-threonyl-[protein] + phosphate. Dual-specificity phosphatase. Preferentially dephosphorylates proteins modified by proline-directed kinases. This is Dual specificity protein phosphatase CDC14C from Homo sapiens (Human).